We begin with the raw amino-acid sequence, 877 residues long: Leucine--tRNA ligase (877 aa).

The short motif at 43–53 (PYPSGRIHMGH) is the 'HIGH' region element. The short motif at 628–632 (KMSKS) is the 'KMSKS' region element. Lysine 631 contributes to the ATP binding site.

Belongs to the class-I aminoacyl-tRNA synthetase family.

It localises to the cytoplasm. It carries out the reaction tRNA(Leu) + L-leucine + ATP = L-leucyl-tRNA(Leu) + AMP + diphosphate. The chain is Leucine--tRNA ligase from Brucella anthropi (strain ATCC 49188 / DSM 6882 / CCUG 24695 / JCM 21032 / LMG 3331 / NBRC 15819 / NCTC 12168 / Alc 37) (Ochrobactrum anthropi).